The chain runs to 303 residues: Peroxisomal trans-2-enoyl-CoA reductase (303 aa).

Residue 23–47 (VTGGATGIGKAIVKELLELGSNVVI) coordinates NADP(+). N6-succinyllysine is present on Lys32. Position 49 is a phosphoserine (Ser49). Catalysis depends on Tyr179, which acts as the Proton acceptor. Tyr179 is modified (phosphotyrosine). Positions 301-303 (AKL) match the Microbody targeting signal motif.

The protein belongs to the short-chain dehydrogenases/reductases (SDR) family. In terms of assembly, interacts with PEX5, probably required to target it into peroxisomes.

The protein resides in the peroxisome. It carries out the reaction a (2E)-enoyl-CoA + NADPH + H(+) = a 2,3-saturated acyl-CoA + NADP(+). The enzyme catalyses (2E)-decenoyl-CoA + NADPH + H(+) = decanoyl-CoA + NADP(+). It catalyses the reaction (2E)-hexenoyl-CoA + NADPH + H(+) = hexanoyl-CoA + NADP(+). The catalysed reaction is (2E)-octenoyl-CoA + NADPH + H(+) = octanoyl-CoA + NADP(+). It carries out the reaction (2E)-dodecenoyl-CoA + NADPH + H(+) = dodecanoyl-CoA + NADP(+). The enzyme catalyses (2E)-tetradecenoyl-CoA + NADPH + H(+) = tetradecanoyl-CoA + NADP(+). Its pathway is lipid metabolism; fatty acid biosynthesis. In terms of biological role, participates in chain elongation of fatty acids. Catalyzes the reduction of trans-2-enoyl-CoAs of varying chain lengths from 6:1 to 16:1, having maximum activity with 10:1 CoA. Has no 2,4-dienoyl-CoA reductase activity. In Homo sapiens (Human), this protein is Peroxisomal trans-2-enoyl-CoA reductase.